The sequence spans 476 residues: Exodeoxyribonuclease 7 large subunit (476 aa).

It belongs to the XseA family. Heterooligomer composed of large and small subunits.

The protein resides in the cytoplasm. It catalyses the reaction Exonucleolytic cleavage in either 5'- to 3'- or 3'- to 5'-direction to yield nucleoside 5'-phosphates.. Its function is as follows. Bidirectionally degrades single-stranded DNA into large acid-insoluble oligonucleotides, which are then degraded further into small acid-soluble oligonucleotides. This chain is Exodeoxyribonuclease 7 large subunit, found in Bartonella tribocorum (strain CIP 105476 / IBS 506).